Reading from the N-terminus, the 419-residue chain is Acyl-coenzyme A thioesterase 1 (419 aa).

Residues Ser232, Asp324, and His358 each act as charge relay system in the active site. Position 416 is a phosphoserine (Ser416).

It belongs to the C/M/P thioester hydrolase family. Monomer. Expressed in liver.

The protein resides in the cytoplasm. The protein localises to the cytosol. It catalyses the reaction hexadecanoyl-CoA + H2O = hexadecanoate + CoA + H(+). It carries out the reaction dodecanoyl-CoA + H2O = dodecanoate + CoA + H(+). The catalysed reaction is tetradecanoyl-CoA + H2O = tetradecanoate + CoA + H(+). The enzyme catalyses decanoyl-CoA + H2O = decanoate + CoA + H(+). It catalyses the reaction octadecanoyl-CoA + H2O = octadecanoate + CoA + H(+). It carries out the reaction eicosanoyl-CoA + H2O = eicosanoate + CoA + H(+). The catalysed reaction is (9Z)-octadecenoyl-CoA + H2O = (9Z)-octadecenoate + CoA + H(+). The enzyme catalyses (9Z)-hexadecenoyl-CoA + H2O = (9Z)-hexadecenoate + CoA + H(+). It catalyses the reaction (9E)-octadecenoyl-CoA + H2O = (9E)-octadecenoate + CoA + H(+). The protein operates within lipid metabolism; fatty acid metabolism. Catalyzes the hydrolysis of acyl-CoAs into free fatty acids and coenzyme A (CoASH), regulating their respective intracellular levels. More active towards saturated and unsaturated long chain fatty acyl-CoAs (C12-C20). This Rattus norvegicus (Rat) protein is Acyl-coenzyme A thioesterase 1 (Acot1).